A 1058-amino-acid chain; its full sequence is Gem-associated protein 4 (1058 aa).

N-acetylmethionine is present on Met-1. Position 84 is a phosphothreonine (Thr-84). 2 positions are modified to phosphoserine: Ser-86 and Ser-205. The segment at 714-735 (LPKEKRCLSLDRKDLAIHILEL) is leucine-zipper.

Part of the core SMN complex that contains SMN1, GEMIN2/SIP1, DDX20/GEMIN3, GEMIN4, GEMIN5, GEMIN6, GEMIN7, GEMIN8 and STRAP/UNRIP. Part of the SMN-Sm complex that contains SMN1, GEMIN2/SIP1, DDX20/GEMIN3, GEMIN4, GEMIN5, GEMIN6, GEMIN7, GEMIN8, STRAP/UNRIP and the Sm proteins SNRPB, SNRPD1, SNRPD2, SNRPD3, SNRPE, SNRPF and SNRPG. Interacts with GEMIN3; the interaction is direct. Interacts with GEMIN5. Interacts with GEMIN8; the interaction is direct. Interacts with several snRNP SM core proteins, including SNRPB, SNRPD1, SNRPD2, SNRPD3 and SNRPE. Interacts with PPP4R2.

The protein localises to the cytoplasm. It is found in the nucleus. Its subcellular location is the nucleolus. The protein resides in the gem. In terms of biological role, the SMN complex catalyzes the assembly of small nuclear ribonucleoproteins (snRNPs), the building blocks of the spliceosome, and thereby plays an important role in the splicing of cellular pre-mRNAs. Most spliceosomal snRNPs contain a common set of Sm proteins SNRPB, SNRPD1, SNRPD2, SNRPD3, SNRPE, SNRPF and SNRPG that assemble in a heptameric protein ring on the Sm site of the small nuclear RNA to form the core snRNP (Sm core). In the cytosol, the Sm proteins SNRPD1, SNRPD2, SNRPE, SNRPF and SNRPG are trapped in an inactive 6S pICln-Sm complex by the chaperone CLNS1A that controls the assembly of the core snRNP. To assemble core snRNPs, the SMN complex accepts the trapped 5Sm proteins from CLNS1A forming an intermediate. Binding of snRNA inside 5Sm triggers eviction of the SMN complex, thereby allowing binding of SNRPD3 and SNRPB to complete assembly of the core snRNP. The sequence is that of Gem-associated protein 4 (GEMIN4) from Homo sapiens (Human).